A 235-amino-acid polypeptide reads, in one-letter code: Putative N-acetylmannosamine-6-phosphate 2-epimerase (235 aa).

It belongs to the NanE family.

It carries out the reaction an N-acyl-D-glucosamine 6-phosphate = an N-acyl-D-mannosamine 6-phosphate. Its pathway is amino-sugar metabolism; N-acetylneuraminate degradation; D-fructose 6-phosphate from N-acetylneuraminate: step 3/5. Functionally, converts N-acetylmannosamine-6-phosphate (ManNAc-6-P) to N-acetylglucosamine-6-phosphate (GlcNAc-6-P). The chain is Putative N-acetylmannosamine-6-phosphate 2-epimerase from Photobacterium profundum (strain SS9).